The primary structure comprises 731 residues: Small conductance calcium-activated potassium channel protein 3 (731 aa).

Residues 1–11 (MDTSGHFHDSG) are compositionally biased toward basic and acidic residues. 2 disordered regions span residues 1–170 (MDTS…SNPF) and 239–258 (ATHNHQHAGTTASSTTFPKA). Residues 30-40 (QQQQQQQQQQQ) are compositionally biased toward low complexity. Residues 41–51 (QPPPPAPPAAP) are compositionally biased toward pro residues. Residues 52–95 (QQPLGPSLQPQPPQLQQQQQQQQQQQQQQPPHPLSQLAQLQSQP) show a composition bias toward low complexity. Polar residues predominate over residues 112–132 (PSSNSTAILHPSSRQGSQLNL). A compositionally biased stretch (low complexity) spans 138 to 147 (GHSPSSTATS). Residue Ser-167 is modified to Phosphoserine. Residues 239-256 (ATHNHQHAGTTASSTTFP) show a composition bias toward polar residues. The chain crosses the membrane as a helical span at residues 288–308 (LIFGMFGIVVMVIETELSWGL). The chain crosses the membrane as a helical span at residues 315-335 (FSLALKCLISLSTIILLGLII). The helical transmembrane segment at 366-386 (ISLEMLVCAIHPIPGEYKFFW) threads the bilayer. A helical transmembrane segment spans residues 405–425 (IILSIPMFLRLYLIARVMLLH). The helical transmembrane segment at 454–474 (LMTICPGTVLLVFSISLWIIA) threads the bilayer. The pore-forming intramembrane region spans 494–514 (FLGAMWLISITFLSIGYGDMV). The chain crosses the membrane as a helical span at residues 523–543 (VCLLTGIMGAGCTALVVAVVA). Residues 561–637 (DTQLTKRIKN…LVDLSKMQNV (77 aa)) are calmodulin-binding. Residues 642 to 669 (ITELNDRSEDLEKQIGSLESKLEHLTAS) are a coiled coil. Residues 709–731 (ISDSPIGVSSTSFPTPYTSSSSC) are disordered. The segment covering 717–731 (SSTSFPTPYTSSSSC) has biased composition (low complexity).

Belongs to the potassium channel KCNN family. KCa2.3/KCNN3 subfamily. Homodimer. Heteromultimer with KCNN2 or KCNN1; this modulates plasma membrane expression and consequently the small conductance calcium-activated potassium channel activity. The complex is composed of 4 channel subunits each of which binds to a calmodulin subunit which regulates the channel activity through calcium-binding. Interacts with CALM1. In terms of tissue distribution, widely distributed in human tissues and is present at 20-60% of KCNN3 in the brain.

Its subcellular location is the cell membrane. It is found in the cytoplasm. It localises to the myofibril. The protein resides in the sarcomere. The protein localises to the z line. It catalyses the reaction K(+)(in) = K(+)(out). Inhibited by bee venom neurotoxin apamin. Functionally, small conductance calcium-activated potassium channel that mediates the voltage-independent transmembrane transfer of potassium across the cell membrane through a constitutive interaction with calmodulin which binds the intracellular calcium allowing its opening. The current is characterized by a voltage-independent activation, an intracellular calcium concentration increase-dependent activation and a single-channel conductance of 10 picosiemens. Also presents an inwardly rectifying current, thus reducing its already small outward conductance of potassium ions, which is particularly the case when the membrane potential displays positive values, above + 20 mV. Activation is followed by membrane hyperpolarization. Thought to regulate neuronal excitability by contributing to the slow component of synaptic afterhyperpolarization. Does not function as a small conductance calcium-activated potassium channel. Selectively suppresses endogenous KCNN3 currents, in a dominant-negative fashion by decreasing the abundance of functional channels in the plasma membrane, possibly by selectively coassembling with and sequestering native KCNN3 protein in intracellular compartments. This dominant inhibitory effect extends to other members of the SK subfamily. This Homo sapiens (Human) protein is Small conductance calcium-activated potassium channel protein 3.